Consider the following 393-residue polypeptide: GDNF family receptor alpha-like (393 aa).

The N-terminal stretch at 1–19 (MLVFIFLAVTLSSENESSS) is a signal peptide. At 20-349 (QTNDCAHLIQ…LTGFNSFFNG (330 aa)) the chain is on the extracellular side. Asparagine 59, asparagine 65, asparagine 101, and asparagine 115 each carry an N-linked (GlcNAc...) asparagine glycan. 11 disulfide bridges follow: cysteine 131/cysteine 189, cysteine 138/cysteine 144, cysteine 155/cysteine 167, cysteine 162/cysteine 210, cysteine 191/cysteine 198, cysteine 220/cysteine 291, cysteine 227/cysteine 233, cysteine 244/cysteine 275, cysteine 252/cysteine 258, cysteine 269/cysteine 316, and cysteine 293/cysteine 304. The segment at 149-228 (ALYLKACSAN…TCLSVIHTCR (80 aa)) is required for interaction with GDF15. A helical transmembrane segment spans residues 350-370 (ELLYVVVCMAVTCGILFLVML). Topologically, residues 371–393 (KLRIQSEKRDPSSIEIAGGVIIQ) are cytoplasmic.

It belongs to the GDNFR family. Interacts (via the extracellular domain) with GDF15 and RET; receptor of GDF15, mediates cellular signaling through interaction with RET after GDF15-binding. Interaction with RET requires previous GDF15-binding. Cleaved and inactivated by MMP14, inhibiting the GDF15-GFRAL aversive response. As to expression, expressed in the brainstem, restricted to cells in the area postrema and the immediately adjacent region of the nucleus tractus solitarius.

The protein localises to the cell membrane. With respect to regulation, specifically inhibited by 3P10 monoclonal antibody. Strongly activated by LY3463251, a long-acting and stable agonist composed of GDF15 conjugated monomeric human IgG4 Fc. Brainstem-restricted receptor for GDF15 hormone, which triggers an aversive response, characterized by nausea, vomiting, and/or loss of appetite in response to various stresses. The aversive response is both required to reduce continuing exposure to those stresses at the time of exposure and to promote avoidance behavior in the future. The GDF15-GFRAL aversive response is triggered by stresses, such as anticancer drugs (camptothecin or cisplatin), cancers or drugs such as metformin. Upon interaction with its ligand, GDF15, mediates the GDF15-induced autophosphorylation and activation of the RET tyrosine kinase receptor, leading to activation of MAPK- and AKT- signaling pathways. Ligand-binding activates GFRAL-expressing neurons localized in the area postrema and nucleus tractus solitarius of the brainstem. The GDF15-GFRAL signal induces expression of genes involved in metabolism, such as lipid metabolism in adipose tissues. This chain is GDNF family receptor alpha-like (Gfral), found in Mus musculus (Mouse).